The following is a 209-amino-acid chain: Octanoyltransferase (209 aa).

Residues 28–203 (NATPETLLLL…RFQGLLDEWL (176 aa)) form the BPL/LPL catalytic domain. Substrate is bound by residues 66 to 73 (RGGDVTFH), 133 to 135 (AIG), and 146 to 148 (GFA). Cysteine 164 acts as the Acyl-thioester intermediate in catalysis.

It belongs to the LipB family.

The protein localises to the cytoplasm. The catalysed reaction is octanoyl-[ACP] + L-lysyl-[protein] = N(6)-octanoyl-L-lysyl-[protein] + holo-[ACP] + H(+). It functions in the pathway protein modification; protein lipoylation via endogenous pathway; protein N(6)-(lipoyl)lysine from octanoyl-[acyl-carrier-protein]: step 1/2. In terms of biological role, catalyzes the transfer of endogenously produced octanoic acid from octanoyl-acyl-carrier-protein onto the lipoyl domains of lipoate-dependent enzymes. Lipoyl-ACP can also act as a substrate although octanoyl-ACP is likely to be the physiological substrate. In Pelobacter propionicus (strain DSM 2379 / NBRC 103807 / OttBd1), this protein is Octanoyltransferase.